Here is an 81-residue protein sequence, read N- to C-terminus: MLRHILGLAKKHPSLIPLFVFLGTGATGATLYLLRLALFSPDVCWDRNNPEPWNKLGPNDQYKFYSVNVDYDKLKKERPDF.

Over 1 to 14 the chain is Mitochondrial matrix; it reads MLRHILGLAKKHPS. Lysine 10 bears the N6-acetyllysine mark. The chain crosses the membrane as a helical span at residues 15–37; the sequence is LIPLFVFLGTGATGATLYLLRLA. At 38–81 the chain is on the mitochondrial intermembrane side; sequence LFSPDVCWDRNNPEPWNKLGPNDQYKFYSVNVDYDKLKKERPDF. Position 66 is a phosphoserine (serine 66).

The protein belongs to the complex IV NDUFA4 subunit family. As to quaternary structure, component of the cytochrome c oxidase (complex IV, CIV), a multisubunit enzyme composed of 14 subunits. The complex is composed of a catalytic core of 3 subunits MT-CO1, MT-CO2 and MT-CO3, encoded in the mitochondrial DNA, and 11 supernumerary subunits COX4I, COX5A, COX5B, COX6A, COX6B, COX6C, COX7A, COX7B, COX7C, COX8 and NDUFA4, which are encoded in the nuclear genome. The complex exists as a monomer or a dimer and forms supercomplexes (SCs) in the inner mitochondrial membrane with NADH-ubiquinone oxidoreductase (complex I, CI) and ubiquinol-cytochrome c oxidoreductase (cytochrome b-c1 complex, complex III, CIII), resulting in different assemblies (supercomplex SCI(1)III(2)IV(1) and megacomplex MCI(2)III(2)IV(2)). Interacts with RAB5IF. Interacts with FLVCR2; this interaction occurs in the absence of heme and is disrupted upon heme binding.

The protein resides in the mitochondrion inner membrane. Its function is as follows. Component of the cytochrome c oxidase, the last enzyme in the mitochondrial electron transport chain which drives oxidative phosphorylation. The respiratory chain contains 3 multisubunit complexes succinate dehydrogenase (complex II, CII), ubiquinol-cytochrome c oxidoreductase (cytochrome b-c1 complex, complex III, CIII) and cytochrome c oxidase (complex IV, CIV), that cooperate to transfer electrons derived from NADH and succinate to molecular oxygen, creating an electrochemical gradient over the inner membrane that drives transmembrane transport and the ATP synthase. Cytochrome c oxidase is the component of the respiratory chain that catalyzes the reduction of oxygen to water. Electrons originating from reduced cytochrome c in the intermembrane space (IMS) are transferred via the dinuclear copper A center (CU(A)) of subunit 2 and heme A of subunit 1 to the active site in subunit 1, a binuclear center (BNC) formed by heme A3 and copper B (CU(B)). The BNC reduces molecular oxygen to 2 water molecules unsing 4 electrons from cytochrome c in the IMS and 4 protons from the mitochondrial matrix. NDUFA4 is required for complex IV maintenance. This Macaca fascicularis (Crab-eating macaque) protein is Cytochrome c oxidase subunit NDUFA4 (NDUFA4).